The sequence spans 510 residues: NAD(P)H-quinone oxidoreductase subunit 2 B, chloroplastic (510 aa).

13 helical membrane passes run 24-44 (LLFF…GLIL), 57-77 (IPWL…ALLF), 99-119 (IFQF…VEYI), 124-144 (MAIT…MFLC), 149-169 (LITI…LSGY), 183-203 (YLLM…WLYG), 227-247 (PGIS…LSPA), 295-315 (WHLL…LIAI), 323-343 (MLAY…IVGD), 354-374 (YMLF…LFGL), 395-415 (ALSL…AGFF), 418-438 (LYLF…IGLL), and 484-504 (MIVC…IIAI).

It belongs to the complex I subunit 2 family. NDH is composed of at least 16 different subunits, 5 of which are encoded in the nucleus.

Its subcellular location is the plastid. It is found in the chloroplast thylakoid membrane. It carries out the reaction a plastoquinone + NADH + (n+1) H(+)(in) = a plastoquinol + NAD(+) + n H(+)(out). The enzyme catalyses a plastoquinone + NADPH + (n+1) H(+)(in) = a plastoquinol + NADP(+) + n H(+)(out). NDH shuttles electrons from NAD(P)H:plastoquinone, via FMN and iron-sulfur (Fe-S) centers, to quinones in the photosynthetic chain and possibly in a chloroplast respiratory chain. The immediate electron acceptor for the enzyme in this species is believed to be plastoquinone. Couples the redox reaction to proton translocation, and thus conserves the redox energy in a proton gradient. The polypeptide is NAD(P)H-quinone oxidoreductase subunit 2 B, chloroplastic (Guizotia abyssinica (Niger)).